The sequence spans 430 residues: Dihydrolipoyllysine-residue acetyltransferase component of pyruvate dehydrogenase complex (430 aa).

One can recognise a Lipoyl-binding domain in the interval 2–77; it reads AFEFRLPDIG…VVGDVIVKID (76 aa). Lys43 carries the post-translational modification N6-lipoyllysine. A disordered region spans residues 80-122; sequence DAEDMQFKGHDDDSSSKEEPAKEEAPAEQAPVATQTEEVDENR. A compositionally biased stretch (basic and acidic residues) spans 84–104; it reads MQFKGHDDDSSSKEEPAKEEA. Residues 125 to 162 form the Peripheral subunit-binding (PSBD) domain; that stretch reads KAMPSVRKYAREKGVNIKAVSGSGKNGRITKEDVDAYL. Residues 164–199 are disordered; sequence GGAPTASNESAASATSEEVAETPAAPAAVSLEGDFP. Positions 166–193 are enriched in low complexity; the sequence is APTASNESAASATSEEVAETPAAPAAVS. Residue His401 is part of the active site.

It belongs to the 2-oxoacid dehydrogenase family. As to quaternary structure, forms a 24-polypeptide structural core with octahedral symmetry. Requires (R)-lipoate as cofactor.

The catalysed reaction is N(6)-[(R)-dihydrolipoyl]-L-lysyl-[protein] + acetyl-CoA = N(6)-[(R)-S(8)-acetyldihydrolipoyl]-L-lysyl-[protein] + CoA. Its function is as follows. The pyruvate dehydrogenase complex catalyzes the overall conversion of pyruvate to acetyl-CoA and CO(2). It contains multiple copies of three enzymatic components: pyruvate dehydrogenase (E1), dihydrolipoamide acetyltransferase (E2) and lipoamide dehydrogenase (E3). This Staphylococcus aureus (strain Mu50 / ATCC 700699) protein is Dihydrolipoyllysine-residue acetyltransferase component of pyruvate dehydrogenase complex (pdhC).